The following is a 483-amino-acid chain: Cysteine proteinase 1, mitochondrial (483 aa).

The transit peptide at 1–30 directs the protein to the mitochondrion; it reads MLPTSVSWSLYLKTFRSHLLRAPQIVLKRM. Catalysis depends on residues Cys-102, His-398, and Asn-421. Residue Lys-483 is a propeptide, removed in mature form; by autocatalysis.

This sequence belongs to the peptidase C1 family. In terms of assembly, homohexamer. Binds to nucleic acids. Binds single-stranded DNA and RNA with higher affinity than double-stranded DNA. In terms of processing, the N-terminus of isoform Cytoplasmic is blocked.

It is found in the mitochondrion. It localises to the cytoplasm. It catalyses the reaction Inactivates bleomycin B2 (a cytotoxic glycometallopeptide) by hydrolysis of a carboxyamide bond of beta-aminoalanine, but also shows general aminopeptidase activity. The specificity varies somewhat with source, but amino acid arylamides of Met, Leu and Ala are preferred.. With respect to regulation, inhibited by E64, a specific inhibitor of cysteine proteases, N-ethylmaleimide, iodacetamide, and mercury and zinc ions. In terms of biological role, the normal physiological role of the enzyme is unknown, but it is not essential for the viability of yeast cells. Has aminopeptidase activity, shortening substrate peptides sequentially by 1 amino acid. Has bleomycin hydrolase activity, which can protect the cell from the toxic effects of bleomycin. Has homocysteine-thiolactonase activity, protecting the cell against homocysteine toxicity. Acts as a repressor in the GAL4 regulatory system, but this does not require either the peptidase or nucleic acid-binding activities. In Saccharomyces cerevisiae (strain YJM789) (Baker's yeast), this protein is Cysteine proteinase 1, mitochondrial (LAP3).